The sequence spans 148 residues: Deoxyuridine 5'-triphosphate nucleotidohydrolase (148 aa).

Substrate is bound by residues 67 to 69 (RSG), Asn80, 84 to 86 (LID), and Met94.

This sequence belongs to the dUTPase family. Mg(2+) is required as a cofactor.

It carries out the reaction dUTP + H2O = dUMP + diphosphate + H(+). The protein operates within pyrimidine metabolism; dUMP biosynthesis; dUMP from dCTP (dUTP route): step 2/2. Functionally, this enzyme is involved in nucleotide metabolism: it produces dUMP, the immediate precursor of thymidine nucleotides and it decreases the intracellular concentration of dUTP so that uracil cannot be incorporated into DNA. In Burkholderia lata (strain ATCC 17760 / DSM 23089 / LMG 22485 / NCIMB 9086 / R18194 / 383), this protein is Deoxyuridine 5'-triphosphate nucleotidohydrolase.